The following is a 111-amino-acid chain: Cytochrome b-c1 complex subunit 7 (111 aa).

At Ala2 the chain carries N-acetylalanine. N6-acetyllysine; alternate is present on Lys12. Lys12 is subject to N6-succinyllysine; alternate. Lys19 is subject to N6-acetyllysine. Position 78 is an N6-acetyllysine; alternate (Lys78). Lys78 carries the post-translational modification N6-succinyllysine; alternate. N6-acetyllysine occurs at positions 83 and 96.

It belongs to the UQCRB/QCR7 family. Component of the ubiquinol-cytochrome c oxidoreductase (cytochrome b-c1 complex, complex III, CIII), a multisubunit enzyme composed of 11 subunits. The complex is composed of 3 respiratory subunits cytochrome b, cytochrome c1 and Rieske protein UQCRFS1, 2 core protein subunits UQCRC1/QCR1 and UQCRC2/QCR2, and 6 low-molecular weight protein subunits UQCRH/QCR6, UQCRB/QCR7, UQCRQ/QCR8, UQCR10/QCR9, UQCR11/QCR10 and subunit 9, the cleavage product of Rieske protein UQCRFS1. The complex exists as an obligatory dimer and forms supercomplexes (SCs) in the inner mitochondrial membrane with NADH-ubiquinone oxidoreductase (complex I, CI) and cytochrome c oxidase (complex IV, CIV), resulting in different assemblies (supercomplex SCI(1)III(2)IV(1) and megacomplex MCI(2)III(2)IV(2)).

It localises to the mitochondrion inner membrane. Functionally, component of the ubiquinol-cytochrome c oxidoreductase, a multisubunit transmembrane complex that is part of the mitochondrial electron transport chain which drives oxidative phosphorylation. The respiratory chain contains 3 multisubunit complexes succinate dehydrogenase (complex II, CII), ubiquinol-cytochrome c oxidoreductase (cytochrome b-c1 complex, complex III, CIII) and cytochrome c oxidase (complex IV, CIV), that cooperate to transfer electrons derived from NADH and succinate to molecular oxygen, creating an electrochemical gradient over the inner membrane that drives transmembrane transport and the ATP synthase. The cytochrome b-c1 complex catalyzes electron transfer from ubiquinol to cytochrome c, linking this redox reaction to translocation of protons across the mitochondrial inner membrane, with protons being carried across the membrane as hydrogens on the quinol. In the process called Q cycle, 2 protons are consumed from the matrix, 4 protons are released into the intermembrane space and 2 electrons are passed to cytochrome c. In Homo sapiens (Human), this protein is Cytochrome b-c1 complex subunit 7 (UQCRB).